The following is a 132-amino-acid chain: uncharacterized protein (132 aa).

The helical transmembrane segment at 66–86 (LPPMLLVLAALFVKGLIPLVL) threads the bilayer.

The protein resides in the membrane. This is an uncharacterized protein from Saccharomyces cerevisiae (strain ATCC 204508 / S288c) (Baker's yeast).